Reading from the N-terminus, the 428-residue chain is Dihydroorotase (428 aa).

Zn(2+) contacts are provided by histidine 59 and histidine 61. Substrate is bound by residues 61–63 (HLR) and asparagine 93. Zn(2+) is bound by residues aspartate 151, histidine 178, and histidine 231. Residue asparagine 277 coordinates substrate. Aspartate 304 provides a ligand contact to Zn(2+). The active site involves aspartate 304. Substrate contacts are provided by residues histidine 308 and 322–323 (FG).

The protein belongs to the metallo-dependent hydrolases superfamily. DHOase family. Class I DHOase subfamily. Requires Zn(2+) as cofactor.

It catalyses the reaction (S)-dihydroorotate + H2O = N-carbamoyl-L-aspartate + H(+). The protein operates within pyrimidine metabolism; UMP biosynthesis via de novo pathway; (S)-dihydroorotate from bicarbonate: step 3/3. In terms of biological role, catalyzes the reversible cyclization of carbamoyl aspartate to dihydroorotate. The sequence is that of Dihydroorotase from Halalkalibacterium halodurans (strain ATCC BAA-125 / DSM 18197 / FERM 7344 / JCM 9153 / C-125) (Bacillus halodurans).